A 295-amino-acid chain; its full sequence is Tyrosine transport system permease protein (295 aa).

8 helical membrane-spanning segments follow: residues 3–23 (GIIS…GVYI), 57–77 (VVAT…TGIL), 81–101 (FKIS…SINL), 122–142 (ISPI…LDLF), 173–193 (ILGL…MAQF), 200–220 (NMGI…ITLF), 232–252 (IIVG…LGML), and 256–276 (LKLI…LNIS).

This sequence belongs to the binding-protein-dependent transport system permease family. The complex is probably composed of two ATP-binding proteins (CDR20291_0806), two transmembrane proteins (CDR20291_0807) and a solute-binding protein (CDR20291_0805).

The protein resides in the cell membrane. In terms of biological role, probably part of an ABC transporter complex involved in tyrosine uptake. May also import phenylalanine. Probably responsible for the translocation of the substrate across the membrane. This Clostridioides difficile (strain R20291) (Peptoclostridium difficile) protein is Tyrosine transport system permease protein.